Here is a 239-residue protein sequence, read N- to C-terminus: uncharacterized protein (239 aa).

Helical transmembrane passes span 9–29 (LAIY…SQII), 65–85 (IIYL…YLFI), 94–114 (IILI…TFVV), and 167–187 (IYFA…MHWI).

The protein resides in the cell membrane. This is an uncharacterized protein from Methanocaldococcus jannaschii (strain ATCC 43067 / DSM 2661 / JAL-1 / JCM 10045 / NBRC 100440) (Methanococcus jannaschii).